Here is a 334-residue protein sequence, read N- to C-terminus: tRNA uridine(34) hydroxylase (334 aa).

One can recognise a Rhodanese domain in the interval 123–217; sequence SDPDVILVDT…YLEEVKAEES (95 aa). Cys-177 (cysteine persulfide intermediate) is an active-site residue.

The protein belongs to the TrhO family.

It catalyses the reaction uridine(34) in tRNA + AH2 + O2 = 5-hydroxyuridine(34) in tRNA + A + H2O. Catalyzes oxygen-dependent 5-hydroxyuridine (ho5U) modification at position 34 in tRNAs. The protein is tRNA uridine(34) hydroxylase of Shewanella baltica (strain OS223).